The primary structure comprises 161 residues: Putative ecotin-like protein (161 aa).

The N-terminal stretch at 1–24 (MSLRPIETAIASLTMLMLQGCAHA) is a signal peptide.

It belongs to the protease inhibitor I11 (ecotin) family.

The chain is Putative ecotin-like protein from Methylobacillus flagellatus (strain ATCC 51484 / DSM 6875 / VKM B-1610 / KT).